We begin with the raw amino-acid sequence, 296 residues long: Protein FAM221A (296 aa).

The tract at residues Met235–Asp263 is disordered. The segment covering Pro237–Ser256 has biased composition (polar residues).

It belongs to the FAM221 family.

This chain is Protein FAM221A (Fam221a), found in Rattus norvegicus (Rat).